The chain runs to 163 residues: Nucleotide-binding protein cbdbA1256 (163 aa).

Belongs to the YajQ family.

In terms of biological role, nucleotide-binding protein. The chain is Nucleotide-binding protein cbdbA1256 from Dehalococcoides mccartyi (strain CBDB1).